The primary structure comprises 200 residues: Peptidyl-tRNA hydrolase (200 aa).

Tyr15 contributes to the tRNA binding site. His20 acts as the Proton acceptor in catalysis. 3 residues coordinate tRNA: Tyr66, Asn68, and Asn114.

The protein belongs to the PTH family. Monomer.

It is found in the cytoplasm. The catalysed reaction is an N-acyl-L-alpha-aminoacyl-tRNA + H2O = an N-acyl-L-amino acid + a tRNA + H(+). In terms of biological role, hydrolyzes ribosome-free peptidyl-tRNAs (with 1 or more amino acids incorporated), which drop off the ribosome during protein synthesis, or as a result of ribosome stalling. Functionally, catalyzes the release of premature peptidyl moieties from peptidyl-tRNA molecules trapped in stalled 50S ribosomal subunits, and thus maintains levels of free tRNAs and 50S ribosomes. The chain is Peptidyl-tRNA hydrolase from Paraburkholderia phymatum (strain DSM 17167 / CIP 108236 / LMG 21445 / STM815) (Burkholderia phymatum).